A 245-amino-acid polypeptide reads, in one-letter code: Fibroblast growth factor 13 (245 aa).

Residues 1–36 (MAAAIASSLIRQKRQAREREKSNACKCVSSPSKGKT) are disordered. Residues 1-62 (MAAAIASSLI…GSKKRRRRRP (62 aa)) form a mediates targeting to the nucleus region. The interval 67-201 (KGIVTKLYSR…AHFLPKPLKV (135 aa)) is mediates interaction with sodium channels. A tubulin-binding domain necessary and sufficient for tubulin-binding region spans residues 157-164 (SMIYRQQQ). Position 208 is a phosphoserine (Ser208). The interval 213 to 245 (TEFSRSGSGTPTKSRSVSGVLNGGKSMSHNEST) is disordered. Over residues 215–245 (FSRSGSGTPTKSRSVSGVLNGGKSMSHNEST) the composition is skewed to polar residues.

Belongs to the heparin-binding growth factors family. Interacts with SCN8A; regulates SCN8A activity. Interacts with SCN1A; may regulate SCN1A activity. Interacts with SCN5A; the interaction is direct and may regulate SNC5A density at membranes and function. May also interact with SCN2A and SCN11A. Interacts with MAPK8IP2; may regulate the MAPK8IP2 scaffolding activity. Post-translationally, may be phosphorylated. In terms of tissue distribution, detected in brain, eye and heart. In brain, the different isoforms display different patterns of expression. Expressed in brain and heart (at protein level). Isoform 3 is highly expressed in cardiac myocytes while isoform 1 is the most abundant in brain.

It localises to the cell projection. The protein resides in the filopodium. Its subcellular location is the growth cone. The protein localises to the dendrite. It is found in the cell membrane. It localises to the sarcolemma. The protein resides in the cytoplasm. Its subcellular location is the nucleus. Functionally, microtubule-binding protein which directly binds tubulin and is involved in both polymerization and stabilization of microtubules. Through its action on microtubules, may participate to the refinement of axons by negatively regulating axonal and leading processes branching. Plays a crucial role in neuron polarization and migration in the cerebral cortex and the hippocampus. Regulates voltage-gated sodium channel transport and function. May also play a role in MAPK signaling. Required for the development of axonal initial segment-targeting inhibitory GABAergic synapses made by chandelier neurons. Its function is as follows. Seems not to be involved in neuroblast polarization and migration but regulates axon branching. This is Fibroblast growth factor 13 from Mus musculus (Mouse).